The chain runs to 101 residues: Urease subunit beta (101 aa).

The protein belongs to the urease beta subunit family. Heterotrimer of UreA (gamma), UreB (beta) and UreC (alpha) subunits. Three heterotrimers associate to form the active enzyme.

The protein resides in the cytoplasm. The enzyme catalyses urea + 2 H2O + H(+) = hydrogencarbonate + 2 NH4(+). The protein operates within nitrogen metabolism; urea degradation; CO(2) and NH(3) from urea (urease route): step 1/1. The chain is Urease subunit beta from Verminephrobacter eiseniae (strain EF01-2).